The following is a 1312-amino-acid chain: Probable histone-lysine N-methyltransferase lin-59 (1312 aa).

Polar residues-rich tracts occupy residues 1–11 (MHGAGEQQQRY) and 25–36 (STSSHQYQQQGA). Disordered regions lie at residues 1 to 41 (MHGA…QMHQ), 54 to 81 (TTTS…RQQG), 154 to 223 (QPSG…KPVD), 312 to 435 (EESK…PPPV), and 524 to 556 (KDNI…EPSE). Positions 54–68 (TTTSAAASTSSSGGS) are enriched in low complexity. Over residues 69–78 (NSSGGSGGHR) the composition is skewed to gly residues. Residues 160–176 (PMSSNAPATTSSATPDS) are compositionally biased toward low complexity. Acidic residues predominate over residues 200-210 (DHDDEEDDDGP). Basic and acidic residues predominate over residues 312–321 (EESKKKKDME). Over residues 344-367 (ATRSTNSPDVTTSNLPEEPSTSTM) the composition is skewed to polar residues. The span at 371 to 382 (KENEDVEKVEGK) shows a compositional bias: basic and acidic residues. The segment covering 383–394 (RRGRKPKKRRGF) has biased composition (basic residues). 2 stretches are compositionally biased toward basic and acidic residues: residues 395 to 419 (HKES…DHLP) and 524 to 535 (KDNIKKEVKEES). Residues 590-635 (APSLTCGCTKGACTSDMDCLNRALRVQCSSDCSVPYCSNRRFWKED) form the AWS domain. Residues 638–750 (NKLCVSNGPR…PNAEITVDKS (113 aa)) form the SET domain. Residues 913 to 934 (DNAPRARALSTSCPSPVPSKRG) form a disordered region. Residues 967-1027 (AVRCICGALD…EYICDFCTNK (61 aa)) form a PHD-type zinc finger. One can recognise a BAH domain in the interval 1100–1223 (NKYRFPKAAT…KTQRVFEKVP (124 aa)). Positions 1248-1295 (RDFRPYDPSNPSPKPPKTSSIPSTSSIDPPQSSSDGLPEVDTKKLSKR) are disordered. A compositionally biased stretch (low complexity) spans 1264–1281 (KTSSIPSTSSIDPPQSSS).

The protein belongs to the class V-like SAM-binding methyltransferase superfamily. Histone-lysine methyltransferase family. SET2 subfamily. Widely expressed throughout embryonic development and into adulthood.

It localises to the nucleus. The enzyme catalyses L-lysyl-[histone] + S-adenosyl-L-methionine = N(6)-methyl-L-lysyl-[histone] + S-adenosyl-L-homocysteine + H(+). Functionally, probable histone methyltransferase. Essential protein required to maintain expression of homeotic genes egl-5 and mab-5. May play an analogous role to the trithorax Group (trxG) proteins. TrxG proteins form multiprotein complexes that are required to maintain the transcriptionally active state of homeotic genes throughout development. May act via a modification of chromatin. The protein is Probable histone-lysine N-methyltransferase lin-59 (lin-59) of Caenorhabditis elegans.